The sequence spans 282 residues: sn-glycerol-3-phosphate transport system permease protein UgpE (282 aa).

The next 6 helical transmembrane spans lie at 14 to 34 (LILI…FVAS), 86 to 106 (MAIA…IVFF), 112 to 132 (MFFF…RILP), 146 to 168 (YAGL…QFFL), 201 to 221 (IAAL…WPLL), and 248 to 268 (WNYV…VVVL). Residues 78 to 269 (LWNSFVVAMA…IPPILVVVLM (192 aa)) enclose the ABC transmembrane type-1 domain.

This sequence belongs to the binding-protein-dependent transport system permease family. In terms of assembly, the complex is composed of two ATP-binding proteins (UgpC), two transmembrane proteins (UgpA and UgpE) and a solute-binding protein (UgpB).

The protein localises to the cell inner membrane. Its function is as follows. Part of the ABC transporter complex UgpBAEC involved in sn-glycerol-3-phosphate (G3P) import. Probably responsible for the translocation of the substrate across the membrane. This is sn-glycerol-3-phosphate transport system permease protein UgpE (ugpE) from Brucella suis biovar 1 (strain 1330).